Here is a 508-residue protein sequence, read N- to C-terminus: Chromosomal replication initiator protein DnaA (508 aa).

The domain I, interacts with DnaA modulators stretch occupies residues 1-91 (MADDPGSSFT…TDALSRRLGQ (91 aa)). The tract at residues 91-167 (QQIQLGVRIA…AIDPAVAAGT (77 aa)) is domain II. The disordered stretch occupies residues 104 to 152 (DDVEDALIPSAEPFPDTDADLSARRRTDSRASGERGAVTNTQPGWTNYF). Residues 124 to 136 (LSARRRTDSRASG) are compositionally biased toward basic and acidic residues. Residues 141 to 152 (VTNTQPGWTNYF) show a composition bias toward polar residues. A domain III, AAA+ region region spans residues 168-384 (SLNRRYTFDT…GALIRVTAFA (217 aa)). ATP contacts are provided by Gly212, Gly214, Lys215, and Thr216. Residues 385–508 (SLNKTPIDKS…TTRIRQRSKR (124 aa)) form a domain IV, binds dsDNA region.

Belongs to the DnaA family. As to quaternary structure, oligomerizes as a right-handed, spiral filament on DNA at oriC.

It is found in the cytoplasm. In terms of biological role, plays an essential role in the initiation and regulation of chromosomal replication. ATP-DnaA binds to the origin of replication (oriC) to initiate formation of the DNA replication initiation complex once per cell cycle. Binds the DnaA box (a 9 base pair repeat at the origin) and separates the double-stranded (ds)DNA. Forms a right-handed helical filament on oriC DNA; dsDNA binds to the exterior of the filament while single-stranded (ss)DNA is stabiized in the filament's interior. The ATP-DnaA-oriC complex binds and stabilizes one strand of the AT-rich DNA unwinding element (DUE), permitting loading of DNA polymerase. After initiation quickly degrades to an ADP-DnaA complex that is not apt for DNA replication. Binds acidic phospholipids. The polypeptide is Chromosomal replication initiator protein DnaA (Mycobacterium avium).